The chain runs to 449 residues: Phosphomannomutase (449 aa).

Ser-97 serves as the catalytic Phosphoserine intermediate. Residues Ser-97, Asp-237, Asp-239, and Asp-241 each contribute to the Mg(2+) site.

Belongs to the phosphohexose mutase family. Requires Mg(2+) as cofactor.

The catalysed reaction is alpha-D-mannose 1-phosphate = D-mannose 6-phosphate. It participates in amino-acid biosynthesis. Catalyzes the formation of mannose-1-P from mannose-6-P. Can also use glucose-6-P. The chain is Phosphomannomutase (manB) from Methanocaldococcus jannaschii (strain ATCC 43067 / DSM 2661 / JAL-1 / JCM 10045 / NBRC 100440) (Methanococcus jannaschii).